A 181-amino-acid polypeptide reads, in one-letter code: MRPMHGTTVLCVRREGRVVIAGDGQVTLDKTVMKATARKVRRLGEGQVVAGFAGATADAFQLFELFEKKLKEHARSLPRAAVELAKQWRTDRMLRRLEALLLVADREHLLVLSGAGDVIEPDPVANGAAAAIGSGGPYALAAARALLAHSALDARQVAEEAMKLAAEICIYTNGNLTIEEL.

T7 is an active-site residue. Na(+) is bound by residues A166, C169, and T172.

This sequence belongs to the peptidase T1B family. HslV subfamily. In terms of assembly, a double ring-shaped homohexamer of HslV is capped on each side by a ring-shaped HslU homohexamer. The assembly of the HslU/HslV complex is dependent on binding of ATP.

The protein localises to the cytoplasm. It carries out the reaction ATP-dependent cleavage of peptide bonds with broad specificity.. Allosterically activated by HslU binding. Functionally, protease subunit of a proteasome-like degradation complex believed to be a general protein degrading machinery. This is ATP-dependent protease subunit HslV from Anaeromyxobacter dehalogenans (strain 2CP-1 / ATCC BAA-258).